Here is a 376-residue protein sequence, read N- to C-terminus: MAKQDYYEILGVSKTAEEREIKKAYKRLAMKYHPDRNQGDKEAEAKFKEIKEAYEVLTDSQKRAAYDQYGHAAFEQGGMGGGGFGGGADFSDIFGDVFGDIFGGGRGRQRAARGADLRYNMELTLEEAVRGVTKEIRIPTLEECDVCHGSGAKPGTQPQTCPTCHGSGQVQMRQGFFAVQQTCPHCQGRGTLIKDPCNKCHGHGRVERSKTLSVKIPAGVDTGDRIRLAGEGEAGQHGAPAGDLYVQVQVKQHPIFEREGNNLYCEVPINFAMAALGGEIEVPTLDGRVKLKVPGETQTGKLFRMRGKGVKSVRGGAQGDLLCRVVVETPVGLNEKQKQLLQELQESFGGPTGEHNSPRSKSFFDGVKKFFDDLTR.

The region spanning 5–70 (DYYEILGVSK…QKRAAYDQYG (66 aa)) is the J domain. Residues 131-209 (GVTKEIRIPT…CHGHGRVERS (79 aa)) form a CR-type zinc finger. The Zn(2+) site is built by C144, C147, C161, C164, C183, C186, C197, and C200. CXXCXGXG motif repeat units lie at residues 144-151 (CDVCHGSG), 161-168 (CPTCHGSG), 183-190 (CPHCQGRG), and 197-204 (CNKCHGHG).

Belongs to the DnaJ family. In terms of assembly, homodimer. Requires Zn(2+) as cofactor.

The protein localises to the cytoplasm. Functionally, participates actively in the response to hyperosmotic and heat shock by preventing the aggregation of stress-denatured proteins and by disaggregating proteins, also in an autonomous, DnaK-independent fashion. Unfolded proteins bind initially to DnaJ; upon interaction with the DnaJ-bound protein, DnaK hydrolyzes its bound ATP, resulting in the formation of a stable complex. GrpE releases ADP from DnaK; ATP binding to DnaK triggers the release of the substrate protein, thus completing the reaction cycle. Several rounds of ATP-dependent interactions between DnaJ, DnaK and GrpE are required for fully efficient folding. Also involved, together with DnaK and GrpE, in the DNA replication of plasmids through activation of initiation proteins. The sequence is that of Chaperone protein DnaJ from Shigella boydii serotype 18 (strain CDC 3083-94 / BS512).